We begin with the raw amino-acid sequence, 124 residues long: Small ribosomal subunit protein uS12 (124 aa).

Residues 1-32 (MPTIQQLVRKGRQAKTTKTKTPALKGSPQRRG) are disordered. The span at 9 to 18 (RKGRQAKTTK) shows a compositional bias: basic residues. Asp-89 is modified (3-methylthioaspartic acid). Positions 105 to 124 (QGVRNRKQARSRYGAKKEKS) are disordered. A compositionally biased stretch (basic residues) spans 108–118 (RNRKQARSRYG).

Belongs to the universal ribosomal protein uS12 family. In terms of assembly, part of the 30S ribosomal subunit. Contacts proteins S8 and S17. May interact with IF1 in the 30S initiation complex.

In terms of biological role, with S4 and S5 plays an important role in translational accuracy. Its function is as follows. Interacts with and stabilizes bases of the 16S rRNA that are involved in tRNA selection in the A site and with the mRNA backbone. Located at the interface of the 30S and 50S subunits, it traverses the body of the 30S subunit contacting proteins on the other side and probably holding the rRNA structure together. The combined cluster of proteins S8, S12 and S17 appears to hold together the shoulder and platform of the 30S subunit. In Salinispora arenicola (strain CNS-205), this protein is Small ribosomal subunit protein uS12.